Consider the following 152-residue polypeptide: Type-1 angiotensin II receptor-associated protein (152 aa).

The Extracellular portion of the chain corresponds to 1 to 23 (MELPAVNLKVILLGHWLLTTWGC). The chain crosses the membrane as a helical span at residues 24 to 44 (IVFSGSYAWANFTILALGVWA). Residues 45-55 (VAQRDSIDAIS) are Cytoplasmic-facing. The helical transmembrane segment at 56–76 (MFLGGLLATIFLDIVHISIFY) threads the bilayer. The Extracellular segment spans residues 77–86 (PRAGLTDTGR). The chain crosses the membrane as a helical span at residues 87-107 (FGAGMAILSLLLKPLSCCFVY). Residues 108–152 (HMYRQRGGFLGSSQDRSAYQTIDSAEAPANAFAVPEGRGQDARGY) are Cytoplasmic-facing. Phosphoserine occurs at positions 119 and 120. Residue threonine 128 is modified to Phosphothreonine. Serine 131 carries the post-translational modification Phosphoserine.

In terms of assembly, interacts with RACK1, and with the carboxy-terminal region of AGTR1.

Its subcellular location is the endoplasmic reticulum membrane. It localises to the golgi apparatus membrane. The protein resides in the cytoplasmic vesicle membrane. Appears to be a negative regulator of type-1 angiotensin II receptor-mediated signaling by regulating receptor internalization as well as mechanism of receptor desensitization such as phosphorylation. Also induces a decrease in cell proliferation and angiotensin II-stimulated transcriptional activity. This Pongo abelii (Sumatran orangutan) protein is Type-1 angiotensin II receptor-associated protein (AGTRAP).